A 177-amino-acid chain; its full sequence is ATP-dependent protease subunit HslV (177 aa).

T5 is a catalytic residue. Na(+) is bound by residues G161, C164, and T167.

It belongs to the peptidase T1B family. HslV subfamily. In terms of assembly, a double ring-shaped homohexamer of HslV is capped on each side by a ring-shaped HslU homohexamer. The assembly of the HslU/HslV complex is dependent on binding of ATP.

Its subcellular location is the cytoplasm. The catalysed reaction is ATP-dependent cleavage of peptide bonds with broad specificity.. Its activity is regulated as follows. Allosterically activated by HslU binding. In terms of biological role, protease subunit of a proteasome-like degradation complex believed to be a general protein degrading machinery. The polypeptide is ATP-dependent protease subunit HslV (Campylobacter concisus (strain 13826)).